The chain runs to 66 residues: DNA-directed RNA polymerase subunit Rpo10 (66 aa).

Zn(2+)-binding residues include C7, C10, C44, and C45.

The protein belongs to the archaeal Rpo10/eukaryotic RPB10 RNA polymerase subunit family. As to quaternary structure, part of the RNA polymerase complex. Zn(2+) is required as a cofactor.

It localises to the cytoplasm. It catalyses the reaction RNA(n) + a ribonucleoside 5'-triphosphate = RNA(n+1) + diphosphate. Its function is as follows. DNA-dependent RNA polymerase (RNAP) catalyzes the transcription of DNA into RNA using the four ribonucleoside triphosphates as substrates. The sequence is that of DNA-directed RNA polymerase subunit Rpo10 from Hyperthermus butylicus (strain DSM 5456 / JCM 9403 / PLM1-5).